Consider the following 355-residue polypeptide: Phosphoribosylformylglycinamidine cyclo-ligase (355 aa).

It belongs to the AIR synthase family.

It is found in the cytoplasm. It catalyses the reaction 2-formamido-N(1)-(5-O-phospho-beta-D-ribosyl)acetamidine + ATP = 5-amino-1-(5-phospho-beta-D-ribosyl)imidazole + ADP + phosphate + H(+). The protein operates within purine metabolism; IMP biosynthesis via de novo pathway; 5-amino-1-(5-phospho-D-ribosyl)imidazole from N(2)-formyl-N(1)-(5-phospho-D-ribosyl)glycinamide: step 2/2. This Hamiltonella defensa subsp. Acyrthosiphon pisum (strain 5AT) protein is Phosphoribosylformylglycinamidine cyclo-ligase.